Consider the following 293-residue polypeptide: 4-hydroxy-tetrahydrodipicolinate synthase (293 aa).

Residue T45 coordinates pyruvate. Y133 serves as the catalytic Proton donor/acceptor. K161 functions as the Schiff-base intermediate with substrate in the catalytic mechanism. I203 provides a ligand contact to pyruvate.

This sequence belongs to the DapA family. In terms of assembly, homotetramer; dimer of dimers.

Its subcellular location is the cytoplasm. The catalysed reaction is L-aspartate 4-semialdehyde + pyruvate = (2S,4S)-4-hydroxy-2,3,4,5-tetrahydrodipicolinate + H2O + H(+). It functions in the pathway amino-acid biosynthesis; L-lysine biosynthesis via DAP pathway; (S)-tetrahydrodipicolinate from L-aspartate: step 3/4. Functionally, catalyzes the condensation of (S)-aspartate-beta-semialdehyde [(S)-ASA] and pyruvate to 4-hydroxy-tetrahydrodipicolinate (HTPA). The sequence is that of 4-hydroxy-tetrahydrodipicolinate synthase from Syntrophotalea carbinolica (strain DSM 2380 / NBRC 103641 / GraBd1) (Pelobacter carbinolicus).